Consider the following 145-residue polypeptide: Male-specific protein scotti (145 aa).

The disordered stretch occupies residues 1–34; that stretch reads MANNRLMPEGQIIEEDMDGEDQNARELDIDDDDD. A compositionally biased stretch (acidic residues) spans 12–21; it reads IIEEDMDGED.

The protein belongs to the male-specific scotti family.

Its function is as follows. Post-meiotically transcribed gene that has a role in late spermiogenesis; required for actin cone progression during spermatid individualization. The chain is Male-specific protein scotti from Drosophila willistoni (Fruit fly).